The following is a 446-amino-acid chain: Tetratricopeptide repeat protein 23 (446 aa).

TPR repeat units follow at residues Leu45–Cys78, Val137–Met170, Ala186–Ser219, Thr310–Val347, and Ala356–Leu389. Residues Ala410 to Asp446 are disordered.

In terms of assembly, associated with the EvC complex composed of EFCAB7, IQCE, EVC2 and EVC.

The protein resides in the cell projection. It localises to the cilium. Functionally, participates positively in the ciliary Hedgehog (Hh) signaling. The polypeptide is Tetratricopeptide repeat protein 23 (TTC23) (Bos taurus (Bovine)).